Reading from the N-terminus, the 542-residue chain is Serine/threonine-protein phosphatase 2A regulatory subunit pptr-1 (542 aa).

Disordered regions lie at residues 1 to 28 and 500 to 542; these read MHGSGHSLTGAPHQIPPPRTQGAATGGQ and DYLK…PAKK. Over residues 528-542 the composition is skewed to polar residues; sequence KKSSTGSETTTPAKK.

Belongs to the phosphatase 2A regulatory subunit B56 family. Part of a complex consisting of a common heterodimeric core enzyme, composed of catalytic subunit let-92 and constant regulatory subunit paa-1, that associates with a variety of regulatory subunits which confer distinct properties to the holoenzyme. Interacts with akt-1 but not akt-2. Interacts with sgk-1. Interacts with P granule components meg-1, meg-3 and meg-4. Expressed in pharynx, vulva and spermatheca.

It is found in the cytoplasm. Its function is as follows. Probable regulatory subunit of serine/threonine-protein phosphatase let-92 which negatively regulates the insulin receptor signaling cascade composed of daf-2, age-1, akt-1, akt-2 and sgk-1 by promoting the dephosphorylation of akt-1 on 'Thr-350'. Negatively regulates several functions controlled by the insulin pathway including dauer formation, lifespan, fat storage and stress resistance. Plays a role in the asymmetric segregation of the P granule components during embryonic cell divisions but does not play an essential role in specifying germ cell fate. Within a PP2A phosphatase complex, acts redundantly with pptr-2, to dephosphorylate P granule components including meg-1 and meg-3 to promote the assembly and accumulation of zygotic P granules in the posterior cytoplasm during zygote polarization, and thus maintain P granule distribution and segregation in early stage embryos following meiosis. In adults, required to promote germ cell proliferation and differentiation when exposed to thermic stress. The sequence is that of Serine/threonine-protein phosphatase 2A regulatory subunit pptr-1 from Caenorhabditis elegans.